The primary structure comprises 347 residues: Haptoglobin (347 aa).

A signal peptide spans 1–18 (MRALGAVVTLLLWGQLFA). The region spanning 31-88 (DSCPKPPEIANGYVEHLVRYRCRQFYKLQTEGDGIYTLNSEKQWVNPAAGDKLPKCEA) is the Sushi domain. Intrachain disulfides connect Cys-52-Cys-86, Cys-90-Cys-207, Cys-250-Cys-281, and Cys-292-Cys-322. The 243-residue stretch at 103–345 (IIGGSMDAKG…LKDWVQETMA (243 aa)) folds into the Peptidase S1 domain. Residues Asn-148 and Asn-152 are each glycosylated (N-linked (GlcNAc...) asparagine). The interval 259–264 (VPEKKG) is interaction with CD163.

The protein belongs to the peptidase S1 family. As to quaternary structure, tetramer of two alpha and two beta chains; disulfide-linked. The hemoglobin/haptoglobin complex is composed of a haptoglobin dimer bound to two hemoglobin alpha-beta dimers. Interacts with CD163. Interacts with ERGIC3. As to expression, expressed by the liver and secreted in plasma.

The protein localises to the secreted. Its function is as follows. As a result of hemolysis, hemoglobin is found to accumulate in the kidney and is secreted in the urine. Haptoglobin captures, and combines with free plasma hemoglobin to allow hepatic recycling of heme iron and to prevent kidney damage. Haptoglobin also acts as an antioxidant, has antibacterial activity and plays a role in modulating many aspects of the acute phase response. Hemoglobin/haptoglobin complexes are rapidly cleared by the macrophage CD163 scavenger receptor expressed on the surface of liver Kupfer cells through an endocytic lysosomal degradation pathway. This is Haptoglobin (Hp) from Rattus norvegicus (Rat).